The chain runs to 274 residues: uncharacterized protein (274 aa).

This is an uncharacterized protein from Invertebrate iridescent virus 6 (IIV-6).